The chain runs to 398 residues: Metalloprotease MmpA (398 aa).

Position 22 (histidine 22) interacts with Zn(2+). Glutamate 23 is an active-site residue. Histidine 26 provides a ligand contact to Zn(2+). Helical transmembrane passes span phenylalanine 117–valine 139, glutamine 316–leucine 338, and alanine 362–tryptophan 381. The PDZ domain occupies alanine 130 to aspartate 203.

It belongs to the peptidase M50B family. Zn(2+) serves as cofactor.

The protein localises to the cell inner membrane. Involved in the regulated intramembrane proteolysis (RIP) of the short isoform of PodJ protein (PodJS), during the swarmer-to-stalked transition. The cleavage occurs near or within the single transmembrane of PodJS thereby releasing the N-terminal segment into the cytoplasm for subsequent degradation. It contributes to preserve asymmetry in the next cell cycle through sequential degradation. In Caulobacter vibrioides (strain ATCC 19089 / CIP 103742 / CB 15) (Caulobacter crescentus), this protein is Metalloprotease MmpA (mmpA).